The chain runs to 396 residues: Elongation factor Tu (396 aa).

The tr-type G domain maps to 10 to 206 (KPHVNVGTIG…ALDTYIPLPE (197 aa)). The tract at residues 19–26 (GHVDHGKT) is G1. Position 19–26 (19–26 (GHVDHGKT)) interacts with GTP. Thr26 is a Mg(2+) binding site. The segment at 60 to 64 (GITIN) is G2. Residues 81–84 (DCPG) form a G3 region. GTP contacts are provided by residues 81–85 (DCPGH) and 136–139 (NKCD). A G4 region spans residues 136 to 139 (NKCD). The interval 174-176 (SAK) is G5.

Belongs to the TRAFAC class translation factor GTPase superfamily. Classic translation factor GTPase family. EF-Tu/EF-1A subfamily. Monomer.

Its subcellular location is the cytoplasm. The enzyme catalyses GTP + H2O = GDP + phosphate + H(+). Its function is as follows. GTP hydrolase that promotes the GTP-dependent binding of aminoacyl-tRNA to the A-site of ribosomes during protein biosynthesis. The protein is Elongation factor Tu of Polaromonas sp. (strain JS666 / ATCC BAA-500).